The primary structure comprises 203 residues: Ribonuclease HII (203 aa).

Positions 18-203 (GHYAGVDEVG…SFRPVREALA (186 aa)) constitute an RNase H type-2 domain. Residues aspartate 24, glutamate 25, and aspartate 116 each coordinate a divalent metal cation.

Belongs to the RNase HII family. The cofactor is Mn(2+). Requires Mg(2+) as cofactor.

The protein localises to the cytoplasm. It catalyses the reaction Endonucleolytic cleavage to 5'-phosphomonoester.. Endonuclease that specifically degrades the RNA of RNA-DNA hybrids. This chain is Ribonuclease HII, found in Shewanella halifaxensis (strain HAW-EB4).